A 119-amino-acid chain; its full sequence is Ribonuclease P protein component (119 aa).

The protein belongs to the RnpA family. In terms of assembly, consists of a catalytic RNA component (M1 or rnpB) and a protein subunit.

It carries out the reaction Endonucleolytic cleavage of RNA, removing 5'-extranucleotides from tRNA precursor.. In terms of biological role, RNaseP catalyzes the removal of the 5'-leader sequence from pre-tRNA to produce the mature 5'-terminus. It can also cleave other RNA substrates such as 4.5S RNA. The protein component plays an auxiliary but essential role in vivo by binding to the 5'-leader sequence and broadening the substrate specificity of the ribozyme. In Erwinia tasmaniensis (strain DSM 17950 / CFBP 7177 / CIP 109463 / NCPPB 4357 / Et1/99), this protein is Ribonuclease P protein component.